A 586-amino-acid polypeptide reads, in one-letter code: Old nuclease (586 aa).

The interval 1–163 (MTVRLASVSI…VEDSTKCKNT (163 aa)) is ATPase domain N-terminus. 34 to 38 (NAGKS) contacts ATP. The tract at residues 164-270 (TTIGKILSAI…SRFGHGTQRS (107 aa)) is dimerization domain. The segment at 271-390 (IQMALIQYLA…TLSNSSYLLF (120 aa)) is ATPase domain C-terminus. The toprim domain stretch occupies residues 393–586 (EVLLVEGKTE…DEMEDFIKWI (194 aa)). 6 residues coordinate a divalent metal cation: Glu398, Glu402, Asp453, Asp455, Asp541, and Glu543. The Stabilizes transition state or protonates leaving group role is filled by Arg570.

The protein belongs to the class 1 OLD nuclease family. It depends on Mg(2+) as a cofactor.

It carries out the reaction Exonucleolytic cleavage in the 5'- to 3'-direction to yield nucleoside 5'-phosphates.. An exonuclease that acts preferentially on linear dsDNA, processively degrading it from 5'-3', releasing 5'-phosphomononucleotides. Initiates on 5'-phosphate and 5'-hydroxyl ends. Also acts on linear ssDNA, nicked DNA and RNA. ATP enhances but is not necessary for exonuclease activity; has ATPase activity that is not stimulated by DNA. The old protein kills E.coli recB and recC mutants and interferes with phage lambda growth. Both the exonuclease and ATPase activities are required in vivo. Probably interferes with lambda phage by degrading its linear DNA. Isolated as a mutant able to lysogenize E.coli strain C cells normally not susceptible to lysis by phage P2. In Enterobacteriaceae (Bacteriophage P2), this protein is Old nuclease.